Consider the following 185-residue polypeptide: UPF0149 protein XF_2010 (185 aa).

Belongs to the UPF0149 family.

This is UPF0149 protein XF_2010 from Xylella fastidiosa (strain 9a5c).